A 423-amino-acid chain; its full sequence is Large ribosomal subunit protein mL37 (423 aa).

Residues 1–29 (MALASGPAMRALAGSARLGLGGYGAPKRG) constitute a mitochondrion transit peptide.

The protein belongs to the mitochondrion-specific ribosomal protein mL37 family. Component of the mitochondrial ribosome large subunit (39S) which comprises a 16S rRNA and about 50 distinct proteins.

Its subcellular location is the mitochondrion. The chain is Large ribosomal subunit protein mL37 (Mrpl37) from Rattus norvegicus (Rat).